The chain runs to 65 residues: Large ribosomal subunit protein uL29 (65 aa).

This sequence belongs to the universal ribosomal protein uL29 family.

The chain is Large ribosomal subunit protein uL29 from Thioalkalivibrio sulfidiphilus (strain HL-EbGR7).